The following is a 233-amino-acid chain: Leucyl/phenylalanyl-tRNA--protein transferase (233 aa).

It belongs to the L/F-transferase family.

The protein localises to the cytoplasm. It catalyses the reaction N-terminal L-lysyl-[protein] + L-leucyl-tRNA(Leu) = N-terminal L-leucyl-L-lysyl-[protein] + tRNA(Leu) + H(+). The catalysed reaction is N-terminal L-arginyl-[protein] + L-leucyl-tRNA(Leu) = N-terminal L-leucyl-L-arginyl-[protein] + tRNA(Leu) + H(+). It carries out the reaction L-phenylalanyl-tRNA(Phe) + an N-terminal L-alpha-aminoacyl-[protein] = an N-terminal L-phenylalanyl-L-alpha-aminoacyl-[protein] + tRNA(Phe). Functions in the N-end rule pathway of protein degradation where it conjugates Leu, Phe and, less efficiently, Met from aminoacyl-tRNAs to the N-termini of proteins containing an N-terminal arginine or lysine. The sequence is that of Leucyl/phenylalanyl-tRNA--protein transferase from Laribacter hongkongensis (strain HLHK9).